We begin with the raw amino-acid sequence, 325 residues long: Beta-ketoacyl-[acyl-carrier-protein] synthase III (325 aa).

Catalysis depends on residues Cys119 and His252. The ACP-binding stretch occupies residues 253-257 (QANIR). Asn282 is an active-site residue.

It belongs to the thiolase-like superfamily. FabH family. As to quaternary structure, homodimer.

It is found in the cytoplasm. The catalysed reaction is malonyl-[ACP] + acetyl-CoA + H(+) = 3-oxobutanoyl-[ACP] + CO2 + CoA. Its pathway is lipid metabolism; fatty acid biosynthesis. Its function is as follows. Catalyzes the condensation reaction of fatty acid synthesis by the addition to an acyl acceptor of two carbons from malonyl-ACP. Catalyzes the first condensation reaction which initiates fatty acid synthesis and may therefore play a role in governing the total rate of fatty acid production. Possesses both acetoacetyl-ACP synthase and acetyl transacylase activities. Its substrate specificity determines the biosynthesis of branched-chain and/or straight-chain of fatty acids. This chain is Beta-ketoacyl-[acyl-carrier-protein] synthase III, found in Polaromonas sp. (strain JS666 / ATCC BAA-500).